The sequence spans 386 residues: Trichocyst matrix protein T2-B (386 aa).

A signal peptide spans 1-19; it reads MKTIILALALIALVSSTQS. The propeptide occupies 20-48; sequence DVIDTIKKIDQSPFGRTLFDTIWLELQTG. Residues 51 to 154 are a coiled coil; sequence LDRLVSTLTD…AEEHEDFEEK (104 aa). The propeptide occupies 184-238; it reads KGKAAKQPHKFTKDVANLIQKHFTTSAKKTAKFQHRKGYSKLFKAFATIASKVEQ. A coiled-coil region spans residues 294 to 325; that stretch reads ALANAISDLAALNDIIAQVEASLDTTVQRIEN.

Belongs to the TMP family.

It localises to the trichocyst. In terms of biological role, structural protein that crystallize inside the trichocyst matrix. The sequence is that of Trichocyst matrix protein T2-B (T2B) from Paramecium tetraurelia.